The primary structure comprises 111 residues: UPF0145 protein BRADO6695 (111 aa).

This sequence belongs to the UPF0145 family.

This is UPF0145 protein BRADO6695 from Bradyrhizobium sp. (strain ORS 278).